A 476-amino-acid chain; its full sequence is Glycogen synthase (476 aa).

Lysine 15 contributes to the ADP-alpha-D-glucose binding site.

The protein belongs to the glycosyltransferase 1 family. Bacterial/plant glycogen synthase subfamily.

The enzyme catalyses [(1-&gt;4)-alpha-D-glucosyl](n) + ADP-alpha-D-glucose = [(1-&gt;4)-alpha-D-glucosyl](n+1) + ADP + H(+). It participates in glycan biosynthesis; glycogen biosynthesis. Synthesizes alpha-1,4-glucan chains using ADP-glucose. The polypeptide is Glycogen synthase (Halalkalibacterium halodurans (strain ATCC BAA-125 / DSM 18197 / FERM 7344 / JCM 9153 / C-125) (Bacillus halodurans)).